A 503-amino-acid chain; its full sequence is Aspartyl/glutamyl-tRNA(Asn/Gln) amidotransferase subunit B (503 aa).

Belongs to the GatB/GatE family. GatB subfamily. In terms of assembly, heterotrimer of A, B and C subunits.

The catalysed reaction is L-glutamyl-tRNA(Gln) + L-glutamine + ATP + H2O = L-glutaminyl-tRNA(Gln) + L-glutamate + ADP + phosphate + H(+). The enzyme catalyses L-aspartyl-tRNA(Asn) + L-glutamine + ATP + H2O = L-asparaginyl-tRNA(Asn) + L-glutamate + ADP + phosphate + 2 H(+). In terms of biological role, allows the formation of correctly charged Asn-tRNA(Asn) or Gln-tRNA(Gln) through the transamidation of misacylated Asp-tRNA(Asn) or Glu-tRNA(Gln) in organisms which lack either or both of asparaginyl-tRNA or glutaminyl-tRNA synthetases. The reaction takes place in the presence of glutamine and ATP through an activated phospho-Asp-tRNA(Asn) or phospho-Glu-tRNA(Gln). The chain is Aspartyl/glutamyl-tRNA(Asn/Gln) amidotransferase subunit B from Mycolicibacterium smegmatis (strain ATCC 700084 / mc(2)155) (Mycobacterium smegmatis).